The primary structure comprises 262 residues: Acyl-[acyl-carrier-protein]--UDP-N-acetylglucosamine O-acyltransferase (262 aa).

The protein belongs to the transferase hexapeptide repeat family. LpxA subfamily. Homotrimer.

The protein resides in the cytoplasm. The catalysed reaction is a (3R)-hydroxyacyl-[ACP] + UDP-N-acetyl-alpha-D-glucosamine = a UDP-3-O-[(3R)-3-hydroxyacyl]-N-acetyl-alpha-D-glucosamine + holo-[ACP]. Its pathway is glycolipid biosynthesis; lipid IV(A) biosynthesis; lipid IV(A) from (3R)-3-hydroxytetradecanoyl-[acyl-carrier-protein] and UDP-N-acetyl-alpha-D-glucosamine: step 1/6. Functionally, involved in the biosynthesis of lipid A, a phosphorylated glycolipid that anchors the lipopolysaccharide to the outer membrane of the cell. The polypeptide is Acyl-[acyl-carrier-protein]--UDP-N-acetylglucosamine O-acyltransferase (Burkholderia multivorans (strain ATCC 17616 / 249)).